Here is an 80-residue protein sequence, read N- to C-terminus: Metallothionein-like protein 1 (80 aa).

Belongs to the metallothionein superfamily. Type 15 family.

Metallothioneins have a high content of cysteine residues that bind various heavy metals. This Coffea arabica (Arabian coffee) protein is Metallothionein-like protein 1 (METAL1).